We begin with the raw amino-acid sequence, 483 residues long: UDP-N-acetylmuramate--L-alanine ligase (483 aa).

Residue 122 to 128 (GSHGKTT) coordinates ATP.

It belongs to the MurCDEF family.

It is found in the cytoplasm. It carries out the reaction UDP-N-acetyl-alpha-D-muramate + L-alanine + ATP = UDP-N-acetyl-alpha-D-muramoyl-L-alanine + ADP + phosphate + H(+). Its pathway is cell wall biogenesis; peptidoglycan biosynthesis. Its function is as follows. Cell wall formation. The sequence is that of UDP-N-acetylmuramate--L-alanine ligase from Synechococcus sp. (strain CC9311).